A 364-amino-acid polypeptide reads, in one-letter code: Homeobox protein KNOX3 (364 aa).

Residues 13 to 49 (TAHGQHHSQLPWGSSPLSAVISPPPQQQQQHQQQSAG) form a disordered region. A compositionally biased stretch (polar residues) spans 19-29 (HSQLPWGSSPL). The region spanning 246–266 (ELKHHLLKKYSGYLSSLKQEL) is the ELK domain. Residues 267–330 (SKKKKKGKLP…NQRKRHWKPT (64 aa)) constitute a DNA-binding region (homeobox; TALE-type).

The protein belongs to the TALE/KNOX homeobox family. In terms of assembly, binds DNA as a monomer. In terms of tissue distribution, the unit of inflorescence is the spikelet, which bears a fertile tract, the lemma, and the floret consisting of palea, two lodicules, three stamens and the pistil. The lemma is completed by the awn, an appendage homologous to the laminae of normal leaves. Expressed in the inflorescences and lemmas and at lower levels, in palea and vascular bundles.

Its subcellular location is the nucleus. In terms of biological role, may play a role in meristem formation and/or maintenance. Overexpression causes the hooded phenotype characterized by the appearance of an extra flower of inverse polarity on the lemma. Binds to the DNA sequence 5'-TGAC-3'. In Hordeum vulgare (Barley), this protein is Homeobox protein KNOX3 (KNOX3).